The primary structure comprises 1363 residues: DNA-directed RNA polymerase subunit beta (1363 aa).

It belongs to the RNA polymerase beta chain family. The RNAP catalytic core consists of 2 alpha, 1 beta, 1 beta' and 1 omega subunit. When a sigma factor is associated with the core the holoenzyme is formed, which can initiate transcription.

The enzyme catalyses RNA(n) + a ribonucleoside 5'-triphosphate = RNA(n+1) + diphosphate. DNA-dependent RNA polymerase catalyzes the transcription of DNA into RNA using the four ribonucleoside triphosphates as substrates. This Syntrophus aciditrophicus (strain SB) protein is DNA-directed RNA polymerase subunit beta.